A 283-amino-acid polypeptide reads, in one-letter code: Large ribosomal subunit protein uL2 (283 aa).

2 disordered regions span residues 37–59 (AKKKKNSGRNNQGKITVRHRGGG) and 219–283 (HKGI…RNSK). A compositionally biased stretch (basic residues) spans 256–269 (WGKRHMGVKTRNNK).

This sequence belongs to the universal ribosomal protein uL2 family. In terms of assembly, part of the 50S ribosomal subunit. Forms a bridge to the 30S subunit in the 70S ribosome.

Its function is as follows. One of the primary rRNA binding proteins. Required for association of the 30S and 50S subunits to form the 70S ribosome, for tRNA binding and peptide bond formation. It has been suggested to have peptidyltransferase activity; this is somewhat controversial. Makes several contacts with the 16S rRNA in the 70S ribosome. The chain is Large ribosomal subunit protein uL2 from Mycoplasmoides gallisepticum (strain R(low / passage 15 / clone 2)) (Mycoplasma gallisepticum).